The chain runs to 477 residues: Ribulose bisphosphate carboxylase large chain (477 aa).

The propeptide occupies 1–2; sequence MS. The residue at position 3 (Pro3) is an N-acetylproline. The residue at position 14 (Lys14) is an N6,N6,N6-trimethyllysine. The substrate site is built by Asn123 and Thr173. The Proton acceptor role is filled by Lys175. A substrate-binding site is contributed by Lys177. The Mg(2+) site is built by Lys201, Asp203, and Glu204. At Lys201 the chain carries N6-carboxylysine. The active-site Proton acceptor is the His294. Residues Arg295, His327, and Ser379 each contribute to the substrate site.

This sequence belongs to the RuBisCO large chain family. Type I subfamily. In terms of assembly, heterohexadecamer of 8 large chains and 8 small chains; disulfide-linked. The disulfide link is formed within the large subunit homodimers. Mg(2+) serves as cofactor. The disulfide bond which can form in the large chain dimeric partners within the hexadecamer appears to be associated with oxidative stress and protein turnover.

The protein localises to the plastid. It is found in the chloroplast. The enzyme catalyses 2 (2R)-3-phosphoglycerate + 2 H(+) = D-ribulose 1,5-bisphosphate + CO2 + H2O. It carries out the reaction D-ribulose 1,5-bisphosphate + O2 = 2-phosphoglycolate + (2R)-3-phosphoglycerate + 2 H(+). In terms of biological role, ruBisCO catalyzes two reactions: the carboxylation of D-ribulose 1,5-bisphosphate, the primary event in carbon dioxide fixation, as well as the oxidative fragmentation of the pentose substrate in the photorespiration process. Both reactions occur simultaneously and in competition at the same active site. The polypeptide is Ribulose bisphosphate carboxylase large chain (Digitalis purpurea (Common foxglove)).